Here is a 1226-residue protein sequence, read N- to C-terminus: Probable phosphorylase b kinase regulatory subunit alpha (1226 aa).

The tract at residues 666–688 is disordered; sequence NEKITTPRGPRTLRRGESVKDRS. Basic and acidic residues predominate over residues 679-688; sequence RRGESVKDRS.

It belongs to the phosphorylase b kinase regulatory chain family.

It participates in glycan biosynthesis; glycogen metabolism. Its function is as follows. Phosphorylase b kinase catalyzes the phosphorylation of serine in certain substrates, including troponin I. The alpha chain may bind calmodulin. The polypeptide is Probable phosphorylase b kinase regulatory subunit alpha (Caenorhabditis elegans).